Here is a 328-residue protein sequence, read N- to C-terminus: UDP-glucose 4-epimerase (328 aa).

Residue threonine 119 coordinates substrate. The active-site Proton acceptor is tyrosine 143.

This sequence belongs to the NAD(P)-dependent epimerase/dehydratase family. NAD(+) serves as cofactor.

It catalyses the reaction UDP-alpha-D-glucose = UDP-alpha-D-galactose. It functions in the pathway carbohydrate metabolism; galactose metabolism. Its pathway is glycan metabolism; exopolysaccharide biosynthesis. The sequence is that of UDP-glucose 4-epimerase (exoB) from Rhizobium meliloti (strain 1021) (Ensifer meliloti).